We begin with the raw amino-acid sequence, 258 residues long: UPF0246 protein YaaA (258 aa).

Belongs to the UPF0246 family.

This Escherichia coli O45:K1 (strain S88 / ExPEC) protein is UPF0246 protein YaaA.